We begin with the raw amino-acid sequence, 425 residues long: Spermatogenesis- and oogenesis-specific basic helix-loop-helix-containing protein 2 (425 aa).

Residues 201 to 252 (KISLLHSSKEKLRRERIKYCCEQLRTLLPYVKGRKNDAASVLEATVDYVKYI) form the bHLH domain.

Forms both hetero- and homodimers with SOHLH1.

The protein resides in the nucleus. Its subcellular location is the cytoplasm. In terms of biological role, transcription regulator of both male and female germline differentiation. Suppresses genes involved in spermatogonial stem cells maintenance, and induces genes important for spermatogonial differentiation. Coordinates oocyte differentiation without affecting meiosis I. In Homo sapiens (Human), this protein is Spermatogenesis- and oogenesis-specific basic helix-loop-helix-containing protein 2 (SOHLH2).